Reading from the N-terminus, the 115-residue chain is Holo-[acyl-carrier-protein] synthase (115 aa).

Positions 6 and 51 each coordinate Mg(2+).

Belongs to the P-Pant transferase superfamily. AcpS family. Mg(2+) is required as a cofactor.

The protein resides in the cytoplasm. The enzyme catalyses apo-[ACP] + CoA = holo-[ACP] + adenosine 3',5'-bisphosphate + H(+). Transfers the 4'-phosphopantetheine moiety from coenzyme A to a Ser of acyl-carrier-protein. This chain is Holo-[acyl-carrier-protein] synthase, found in Campylobacter jejuni (strain RM1221).